The sequence spans 280 residues: Putative pyruvate, phosphate dikinase regulatory protein (280 aa).

Position 153 to 160 (153 to 160 (GISRTSKT)) interacts with ADP.

Belongs to the pyruvate, phosphate/water dikinase regulatory protein family. PDRP subfamily.

The catalysed reaction is N(tele)-phospho-L-histidyl/L-threonyl-[pyruvate, phosphate dikinase] + ADP = N(tele)-phospho-L-histidyl/O-phospho-L-threonyl-[pyruvate, phosphate dikinase] + AMP + H(+). It carries out the reaction N(tele)-phospho-L-histidyl/O-phospho-L-threonyl-[pyruvate, phosphate dikinase] + phosphate + H(+) = N(tele)-phospho-L-histidyl/L-threonyl-[pyruvate, phosphate dikinase] + diphosphate. In terms of biological role, bifunctional serine/threonine kinase and phosphorylase involved in the regulation of the pyruvate, phosphate dikinase (PPDK) by catalyzing its phosphorylation/dephosphorylation. The polypeptide is Putative pyruvate, phosphate dikinase regulatory protein (Bartonella quintana (strain Toulouse) (Rochalimaea quintana)).